The sequence spans 243 residues: Terpene cyclase dpmpB (243 aa).

Helical transmembrane passes span 13 to 33, 51 to 71, 78 to 98, 112 to 132, 141 to 161, 169 to 189, and 207 to 227; these read FLEV…GWTA, ALMP…ILPF, WVHV…IKFA, LTWI…ALAA, AWSA…QLLC, SYLL…QDIL, and LWFV…LWYV.

This sequence belongs to the paxB family.

It localises to the membrane. It participates in secondary metabolite biosynthesis; terpenoid biosynthesis. Functionally, terpene cyclase; part of the gene cluster that mediates the biosynthesis of diterpenoid pyrones. The first step of the pathway is the synthesis of the alpha-pyrone moiety by the polyketide synthase dpmpA via condensation of one acetyl-CoA starter unit with 3 malonyl-CoA units and 2 methylations. The alpha-pyrone is then combined with geranylgeranyl pyrophosphate (GGPP) formed by the GGPP synthase dpmpD through the action of the prenyltransferase dpmpC to yield a linear alpha-pyrone diterpenoid. Subsequent steps in the diterpenoid pyrone biosynthetic pathway involve the decalin core formation, which is initiated by the epoxidation of the C10-C11 olefin by the FAD-dependent oxidoreductase dpmpE, and is followed by a cyclization cascade catalyzed by the terpene cyclase dpmpB. The short chain dehydrogenase/reductase dpmpG then oxidizes the 8S hydroxy group to a ketone and the short chain dehydrogenase/reductase dpmpH reduces the ketone to the 8R hydroxy group to yield higginsianin B. Higginsianin B is further methylated by the methyltransferase dpmpI to produce the intermediate named FDDP B. The cytochrome P450 monooxygenase dpmpJ then oxidizes the C-26 methyl to primary alcohol, producing the final diterpenoid pyrone with a C-26 primary alcohol on the gamma-pyrone moiety named FDDP C. The polypeptide is Terpene cyclase dpmpB (Macrophomina phaseolina (strain MS6) (Charcoal rot fungus)).